The sequence spans 1598 residues: Pentafunctional AROM polypeptide (1598 aa).

The interval 1–384 (MGVPTKISIL…YEPRASTVSN (384 aa)) is 3-dehydroquinate synthase. NAD(+) is bound by residues 44-46 (DTN), 81-84 (ESSK), 114-116 (GGV), and D119. R130 is a binding site for 7-phospho-2-dehydro-3-deoxy-D-arabino-heptonate. Residue 139 to 140 (TT) coordinates NAD(+). 7-phospho-2-dehydro-3-deoxy-D-arabino-heptonate contacts are provided by D146 and K152. NAD(+) is bound at residue K161. N162 provides a ligand contact to 7-phospho-2-dehydro-3-deoxy-D-arabino-heptonate. NAD(+)-binding positions include 179-182 (FLNT) and N190. E194 is a binding site for Zn(2+). 7-phospho-2-dehydro-3-deoxy-D-arabino-heptonate-binding positions include 194 to 197 (EVIK) and K250. E260 (proton acceptor; for 3-dehydroquinate synthase activity) is an active-site residue. 7-phospho-2-dehydro-3-deoxy-D-arabino-heptonate-binding positions include 264-268 (RNLLN) and H271. H271 lines the Zn(2+) pocket. Residue H275 is the Proton acceptor; for 3-dehydroquinate synthase activity of the active site. 2 residues coordinate 7-phospho-2-dehydro-3-deoxy-D-arabino-heptonate: H287 and K356. Position 287 (H287) interacts with Zn(2+). The EPSP synthase stretch occupies residues 397–842 (VYPGFPKSLN…WNTLAQTFKV (446 aa)). C824 acts as the For EPSP synthase activity in catalysis. The interval 867-1059 (AASIFIIGMR…RRKENTFFVS (193 aa)) is shikimate kinase. 874–881 (GMRGAGKT) provides a ligand contact to ATP. The tract at residues 1060-1280 (LTFPDLTPAS…AAPGQLSARE (221 aa)) is 3-dehydroquinase. The active-site Proton acceptor; for 3-dehydroquinate dehydratase activity is the H1183. Residue K1211 is the Schiff-base intermediate with substrate; for 3-dehydroquinate dehydratase activity of the active site. Residues 1293–1598 (AKKFAVIGKP…GVSSSDDTIS (306 aa)) form a shikimate dehydrogenase region.

In the N-terminal section; belongs to the sugar phosphate cyclases superfamily. Dehydroquinate synthase family. The protein in the 2nd section; belongs to the EPSP synthase family. This sequence in the 3rd section; belongs to the shikimate kinase family. It in the 4th section; belongs to the type-I 3-dehydroquinase family. In the C-terminal section; belongs to the shikimate dehydrogenase family. As to quaternary structure, homodimer. It depends on Zn(2+) as a cofactor.

The protein resides in the cytoplasm. The catalysed reaction is 7-phospho-2-dehydro-3-deoxy-D-arabino-heptonate = 3-dehydroquinate + phosphate. It catalyses the reaction 3-dehydroquinate = 3-dehydroshikimate + H2O. It carries out the reaction shikimate + NADP(+) = 3-dehydroshikimate + NADPH + H(+). The enzyme catalyses shikimate + ATP = 3-phosphoshikimate + ADP + H(+). The catalysed reaction is 3-phosphoshikimate + phosphoenolpyruvate = 5-O-(1-carboxyvinyl)-3-phosphoshikimate + phosphate. It participates in metabolic intermediate biosynthesis; chorismate biosynthesis; chorismate from D-erythrose 4-phosphate and phosphoenolpyruvate: step 2/7. The protein operates within metabolic intermediate biosynthesis; chorismate biosynthesis; chorismate from D-erythrose 4-phosphate and phosphoenolpyruvate: step 3/7. It functions in the pathway metabolic intermediate biosynthesis; chorismate biosynthesis; chorismate from D-erythrose 4-phosphate and phosphoenolpyruvate: step 4/7. Its pathway is metabolic intermediate biosynthesis; chorismate biosynthesis; chorismate from D-erythrose 4-phosphate and phosphoenolpyruvate: step 5/7. It participates in metabolic intermediate biosynthesis; chorismate biosynthesis; chorismate from D-erythrose 4-phosphate and phosphoenolpyruvate: step 6/7. Functionally, the AROM polypeptide catalyzes 5 consecutive enzymatic reactions in prechorismate polyaromatic amino acid biosynthesis. This is Pentafunctional AROM polypeptide from Paracoccidioides brasiliensis (strain Pb18).